The sequence spans 353 residues: Green-sensitive opsin-2 (353 aa).

The Extracellular portion of the chain corresponds to 1-47 (MAAHEPVFAARRHNEDTTRESAFVYTNANNTRDPFEGPNYHIAPRWV). Asn-29 carries an N-linked (GlcNAc...) asparagine glycan. A helical transmembrane segment spans residues 48–72 (YNVSSLWMIFVVIASVFTNGLVIVA). At 73–84 (TAKFKKLRHPLN) the chain is on the cytoplasmic side. The chain crosses the membrane as a helical span at residues 85-110 (WILVNLAIADLGETVLASTISVINQI). Topologically, residues 111–124 (FGYFILGHPMCVFE) are extracellular. A disulfide bridge links Cys-121 with Cys-198. A helical transmembrane segment spans residues 125-144 (GWTVSVCGITALWSLTIISW). Residues 145-163 (ERWVVVCKPFGNVKFDGKW) lie on the Cytoplasmic side of the membrane. Residues 164 to 187 (AAGGIIFSWVWAIIWCTPPIFGWS) traverse the membrane as a helical segment. Residues 188 to 213 (RYWPHGLKTSCGPDVFSGSEDPGVAS) lie on the Extracellular side of the membrane. A helical transmembrane segment spans residues 214–241 (YMITLMLTCCILPLSIIIICYIFVWSAI). Over 242 to 263 (HQVAQQQKDSESTQKAEKEVSR) the chain is Cytoplasmic. Residues 264-287 (MVVVMILAFIVCWGPYASFATFSA) form a helical membrane-spanning segment. The Extracellular segment spans residues 288 to 295 (VNPGYAWH). A helical transmembrane segment spans residues 296–320 (PLAAAMPAYFAKSATIYNPIIYVFM). An N6-(retinylidene)lysine modification is found at Lys-307. Topologically, residues 321 to 353 (NRQFRSCIMQLFGKKVEDASEVSGSTTEVSTAS) are cytoplasmic.

Belongs to the G-protein coupled receptor 1 family. Opsin subfamily. In terms of tissue distribution, the color pigments are found in the cone photoreceptor cells.

It is found in the membrane. Its function is as follows. Visual pigments are the light-absorbing molecules that mediate vision. They consist of an apoprotein, opsin, covalently linked to cis-retinal. The chain is Green-sensitive opsin-2 (G101) from Psalidodon fasciatus (Banded astyanax).